Here is a 263-residue protein sequence, read N- to C-terminus: Thiazole synthase (263 aa).

Lys102 serves as the catalytic Schiff-base intermediate with DXP. Residues Gly164, 190-191 (AG), and 212-213 (NT) each bind 1-deoxy-D-xylulose 5-phosphate.

The protein belongs to the ThiG family. In terms of assembly, homotetramer. Forms heterodimers with either ThiH or ThiS.

The protein resides in the cytoplasm. The catalysed reaction is [ThiS sulfur-carrier protein]-C-terminal-Gly-aminoethanethioate + 2-iminoacetate + 1-deoxy-D-xylulose 5-phosphate = [ThiS sulfur-carrier protein]-C-terminal Gly-Gly + 2-[(2R,5Z)-2-carboxy-4-methylthiazol-5(2H)-ylidene]ethyl phosphate + 2 H2O + H(+). It functions in the pathway cofactor biosynthesis; thiamine diphosphate biosynthesis. Its function is as follows. Catalyzes the rearrangement of 1-deoxy-D-xylulose 5-phosphate (DXP) to produce the thiazole phosphate moiety of thiamine. Sulfur is provided by the thiocarboxylate moiety of the carrier protein ThiS. In vitro, sulfur can be provided by H(2)S. The polypeptide is Thiazole synthase (Helicobacter hepaticus (strain ATCC 51449 / 3B1)).